A 189-amino-acid chain; its full sequence is MVRYVKFSRTANRGVHISAEARINERIRVPEVRLVGPNGEQVGIVRIEDARKLAFDADLDLVEVAPNAKPPVCKIMDYGKFKYEAAQKARESRKNQQQTVVKEQKLRPKIDDHDYETKKNNVIRFLEKGSKVKVTIMFRGREQARPELGYRLLERLANDVADFGIVETRAKQDGRNMTMVLGPVRKGKK.

The protein belongs to the IF-3 family. Monomer.

It localises to the cytoplasm. Its function is as follows. IF-3 binds to the 30S ribosomal subunit and shifts the equilibrium between 70S ribosomes and their 50S and 30S subunits in favor of the free subunits, thus enhancing the availability of 30S subunits on which protein synthesis initiation begins. The protein is Translation initiation factor IF-3 of Corynebacterium glutamicum (strain R).